Consider the following 421-residue polypeptide: MVPTVSLEPTGHSCWDEPLSIAVRGLAPEQPVTLRTALRDEKGALFRAHARYRADSHGELDLARTPALGGSFSGLEPMGLLWAMEPDRPFWRLIKRDVQTPFVVELEVLDGHEPDGGRLLARAVHERHFMAPGVRRVPVREGRVRATLFLPPGTGPFPGIIDLFGVGGGLLEYRASLLAGKGFAVMALAYYKYDDLPKVIDILHLEYFEEAVTYLLSHPQVKGPGVGLLGISKGAELSLSMASFLKGITAAVVINGATVNVISTLYYKEESLPGLGMHLERIKVTKDGFKDIIDILNVPLEAPDQKSLIPLERSDTAFLFLVGQDDHNWKSEFYAREASKRLQAHGKEKPQIVCYPKTGHHIEPPYIPWSIAAPHSYFDKPILLGGEPRAHAMAQVDAWQRLQTFFHKHLSGDKRPSPAKL.

Catalysis depends on charge relay system residues S232, D326, and H360. The Microbody targeting signal signature appears at 419–421; the sequence is AKL.

Belongs to the C/M/P thioester hydrolase family. As to expression, highly expressed in spleen, brain, testis and proximal and distal intestine; expressed at low level in the liver.

Its subcellular location is the peroxisome. It carries out the reaction hexadecanoyl-CoA + H2O = hexadecanoate + CoA + H(+). It catalyses the reaction decanoyl-CoA + H2O = decanoate + CoA + H(+). The catalysed reaction is octanoyl-CoA + H2O = octanoate + CoA + H(+). The enzyme catalyses dodecanoyl-CoA + H2O = dodecanoate + CoA + H(+). It carries out the reaction tetradecanoyl-CoA + H2O = tetradecanoate + CoA + H(+). It catalyses the reaction octadecanoyl-CoA + H2O = octadecanoate + CoA + H(+). The catalysed reaction is eicosanoyl-CoA + H2O = eicosanoate + CoA + H(+). The enzyme catalyses (9Z)-octadecenoyl-CoA + H2O = (9Z)-octadecenoate + CoA + H(+). It carries out the reaction (9Z,12Z)-octadecadienoyl-CoA + H2O = (9Z,12Z)-octadecadienoate + CoA + H(+). It catalyses the reaction (5Z,8Z,11Z,14Z)-eicosatetraenoyl-CoA + H2O = (5Z,8Z,11Z,14Z)-eicosatetraenoate + CoA + H(+). The catalysed reaction is (9Z)-hexadecenoyl-CoA + H2O = (9Z)-hexadecenoate + CoA + H(+). It functions in the pathway lipid metabolism; fatty acid metabolism. Functionally, catalyzes the hydrolysis of acyl-CoAs into free fatty acids and coenzyme A (CoASH), regulating their respective intracellular levels. Mainly active on medium-chain acyl-CoAs. Seems to be involved in intraperoxisomal regulation of acyl-CoA levels, but not CoASH levels. May have a function in termination of beta-oxidation of fatty acids. The protein is Acyl-coenzyme A thioesterase 5 (Acot5) of Mus musculus (Mouse).